The primary structure comprises 59 residues: Small ribosomal subunit protein bS21 (59 aa).

Positions 34-59 are disordered; it reads KHEHYEKPSVKRKKKSEAARRRKRSF. Over residues 43–59 the composition is skewed to basic residues; that stretch reads VKRKKKSEAARRRKRSF.

This sequence belongs to the bacterial ribosomal protein bS21 family.

The protein is Small ribosomal subunit protein bS21 of Desulforudis audaxviator (strain MP104C).